A 427-amino-acid polypeptide reads, in one-letter code: Tryptophan synthase beta chain (427 aa).

Lys-100 carries the post-translational modification N6-(pyridoxal phosphate)lysine.

It belongs to the TrpB family. Tetramer of two alpha and two beta chains. It depends on pyridoxal 5'-phosphate as a cofactor.

The catalysed reaction is (1S,2R)-1-C-(indol-3-yl)glycerol 3-phosphate + L-serine = D-glyceraldehyde 3-phosphate + L-tryptophan + H2O. Its pathway is amino-acid biosynthesis; L-tryptophan biosynthesis; L-tryptophan from chorismate: step 5/5. The beta subunit is responsible for the synthesis of L-tryptophan from indole and L-serine. This Streptomyces coelicolor (strain ATCC BAA-471 / A3(2) / M145) protein is Tryptophan synthase beta chain (trpB).